We begin with the raw amino-acid sequence, 127 residues long: Fluoride-specific ion channel FluC (127 aa).

A run of 4 helical transmembrane segments spans residues 4 to 24 (LLLA…LLSM), 35 to 55 (LGTL…FAWF), 71 to 91 (TGFC…VFLL), and 103 to 123 (VFVN…LFSA). Positions 75 and 78 each coordinate Na(+).

Belongs to the fluoride channel Fluc/FEX (TC 1.A.43) family.

It is found in the cell inner membrane. The catalysed reaction is fluoride(in) = fluoride(out). With respect to regulation, na(+) is not transported, but it plays an essential structural role and its presence is essential for fluoride channel function. Functionally, fluoride-specific ion channel. Important for reducing fluoride concentration in the cell, thus reducing its toxicity. This is Fluoride-specific ion channel FluC from Escherichia coli (strain ATCC 8739 / DSM 1576 / NBRC 3972 / NCIMB 8545 / WDCM 00012 / Crooks).